We begin with the raw amino-acid sequence, 352 residues long: UDP-N-acetylglucosamine--N-acetylmuramyl-(pentapeptide) pyrophosphoryl-undecaprenol N-acetylglucosamine transferase (352 aa).

UDP-N-acetyl-alpha-D-glucosamine-binding positions include 12-14 (TGG), Asn124, Arg160, Ser188, and Gln287.

It belongs to the glycosyltransferase 28 family. MurG subfamily.

The protein resides in the cell inner membrane. The enzyme catalyses di-trans,octa-cis-undecaprenyl diphospho-N-acetyl-alpha-D-muramoyl-L-alanyl-D-glutamyl-meso-2,6-diaminopimeloyl-D-alanyl-D-alanine + UDP-N-acetyl-alpha-D-glucosamine = di-trans,octa-cis-undecaprenyl diphospho-[N-acetyl-alpha-D-glucosaminyl-(1-&gt;4)]-N-acetyl-alpha-D-muramoyl-L-alanyl-D-glutamyl-meso-2,6-diaminopimeloyl-D-alanyl-D-alanine + UDP + H(+). It functions in the pathway cell wall biogenesis; peptidoglycan biosynthesis. Cell wall formation. Catalyzes the transfer of a GlcNAc subunit on undecaprenyl-pyrophosphoryl-MurNAc-pentapeptide (lipid intermediate I) to form undecaprenyl-pyrophosphoryl-MurNAc-(pentapeptide)GlcNAc (lipid intermediate II). The sequence is that of UDP-N-acetylglucosamine--N-acetylmuramyl-(pentapeptide) pyrophosphoryl-undecaprenol N-acetylglucosamine transferase from Dechloromonas aromatica (strain RCB).